An 82-amino-acid polypeptide reads, in one-letter code: High-potential iron-sulfur protein (82 aa).

[4Fe-4S] cluster contacts are provided by C42, C45, C60, and C74.

This sequence belongs to the high-potential iron-sulfur protein (HiPIP) family. In terms of assembly, homodimer.

Its subcellular location is the periplasm. Specific class of high-redox-potential 4Fe-4S ferredoxins. Functions in anaerobic electron transport in most purple and in some other photosynthetic bacteria and in at least one genus (Paracoccus) of halophilic, denitrifying bacteria. The protein is High-potential iron-sulfur protein (hip) of Marichromatium purpuratum (Chromatium purpuratum).